A 296-amino-acid polypeptide reads, in one-letter code: NAD kinase (296 aa).

Asp73 acts as the Proton acceptor in catalysis. Residues 73–74 (DG), Lys78, 151–152 (NE), Arg178, Asp180, and 191–196 (TAHAMS) contribute to the NAD(+) site.

This sequence belongs to the NAD kinase family. The cofactor is a divalent metal cation.

The protein localises to the cytoplasm. It catalyses the reaction NAD(+) + ATP = ADP + NADP(+) + H(+). In terms of biological role, involved in the regulation of the intracellular balance of NAD and NADP, and is a key enzyme in the biosynthesis of NADP. Catalyzes specifically the phosphorylation on 2'-hydroxyl of the adenosine moiety of NAD to yield NADP. The protein is NAD kinase of Francisella tularensis subsp. mediasiatica (strain FSC147).